A 377-amino-acid chain; its full sequence is Succinyl-diaminopimelate desuccinylase (377 aa).

His66 is a Zn(2+) binding site. Asp68 is a catalytic residue. Asp99 is a binding site for Zn(2+). The active-site Proton acceptor is the Glu133. Zn(2+) contacts are provided by Glu134, Glu162, and His348.

It belongs to the peptidase M20A family. DapE subfamily. Homodimer. Zn(2+) serves as cofactor. It depends on Co(2+) as a cofactor.

It carries out the reaction N-succinyl-(2S,6S)-2,6-diaminopimelate + H2O = (2S,6S)-2,6-diaminopimelate + succinate. It participates in amino-acid biosynthesis; L-lysine biosynthesis via DAP pathway; LL-2,6-diaminopimelate from (S)-tetrahydrodipicolinate (succinylase route): step 3/3. In terms of biological role, catalyzes the hydrolysis of N-succinyl-L,L-diaminopimelic acid (SDAP), forming succinate and LL-2,6-diaminopimelate (DAP), an intermediate involved in the bacterial biosynthesis of lysine and meso-diaminopimelic acid, an essential component of bacterial cell walls. The chain is Succinyl-diaminopimelate desuccinylase from Xylella fastidiosa (strain 9a5c).